Here is an 87-residue protein sequence, read N- to C-terminus: Small ribosomal subunit protein uS17 (87 aa).

Belongs to the universal ribosomal protein uS17 family. Part of the 30S ribosomal subunit.

Functionally, one of the primary rRNA binding proteins, it binds specifically to the 5'-end of 16S ribosomal RNA. This is Small ribosomal subunit protein uS17 from Bacillus mycoides (strain KBAB4) (Bacillus weihenstephanensis).